The primary structure comprises 422 residues: Zinc finger protein Gfi-1 (422 aa).

The tract at residues 1-20 is SNAG domain; it reads MPRSFLVKSKKAHSYHQPRS. The disordered stretch occupies residues 1–109; sequence MPRSFLVKSK…ASEKSMCPSL (109 aa). Phosphoserine is present on residues S20 and S56. Positions 140-257 are required for interaction with RELA; that stretch reads RPCGALERGA…LLLGGGSYKC (118 aa). C2H2-type zinc fingers lie at residues 255–278, 284–306, 312–334, 340–362, 368–390, and 396–419; these read YKCI…RRSH, FACE…KAVH, FDCK…LLIH, YPCQ…TFIH, HKCQ…SRKH, and FGCD…ETQH.

Interacts with U2AF1L4. Component of RCOR-GFI-KDM1A-HDAC complexes. Interacts directly with RCOR1, KDM1A and HDAC2. Also interacts with HDAC1. Interacts (via the zinc-finger domain) with ARIH2; the interaction prevents GFI1 ubiquitination and proteasomal degradation. Interacts with PIAS3; the interaction relieves the inhibitory effect of PIAS3 on STAT3-mediated transcriptional activity. Forms a complex with EHMT2 and HDAC1 to promote 'Lys-9' dimethylation of H3 (H3K9Me2) and repress expression of target genes. Interacts directly with EHMT2. Component of the GFI1-AJUBA-HDAC1 repressor complex. Interacts directly with AJUBA (via ITS LIM domains); the interaction results in the HDAC-dependent corepression of a subset of GFI1 target genes and, occurs independently of the SNAG domain. Interacts with SPI1; the interaction inhibits SPI1 transcriptional activity targeted at macrophage-specific genes, repressing macrophage differentiation of myeloid progenitor cells and promoting granulocyte commitment. Interacts with RUNX1T1; the interaction represses HDAC-mediated transcriptional activity. Interacts with RELA; the interaction occurs on liposaccharide (LPS) stimulation and controls RELA DNA binding activity and regulates endotoxin-mediated TOLL-like receptor inflammatory response. Interacts (via the C-terminal zinc fingers) with ZBTB17; the interaction results in the recruitment of GFI1 to the CDKN1A/p21 and CDKN1B promoters and repression of transcription. Ubiquitinated. Ubiquitination and degradation by the proteasome is inhibited by the ubiquitin ligase, ARIH2.

The protein localises to the nucleus. Functionally, transcription repressor essential for hematopoiesis. Functions in a cell-context and development-specific manner. Binds to 5'-TAAATCAC[AT]GCA-3' in the promoter region of a large number of genes. Component of several complexes, including the EHMT2-GFI1-HDAC1, AJUBA-GFI1-HDAC1 and RCOR-GFI-KDM1A-HDAC complexes, that suppress, via histone deacetylase (HDAC) recruitment, a number of genes implicated in multilineage blood cell development. Regulates neutrophil differentiation, promotes proliferation of lymphoid cells, and is required for granulocyte development. Inhibits SPI1 transcriptional activity at macrophage-specific genes, repressing macrophage differentiation of myeloid progenitor cells and promoting granulocyte commitment. Mediates, together with U2AF1L4, the alternative splicing of CD45 and controls T-cell receptor signaling. Regulates the endotoxin-mediated Toll-like receptor (TLR) inflammatory response by antagonizing RELA. Cooperates with CBFA2T2 to regulate ITGB1-dependent neurite growth. Controls cell-cycle progression by repressing CDKNIA/p21 transcription in response to TGFB1 via recruitment of GFI1 by ZBTB17 to the CDKNIA/p21 and CDKNIB promoters. Required for the maintenance of inner ear hair cells. In addition to its role in transcription, acts as a substrate adapter for PRMT1 in the DNA damage response: facilitates the recognition of TP53BP1 and MRE11 substrates by PRMT1, promoting their methylation and the DNA damage response. The chain is Zinc finger protein Gfi-1 (GFI1) from Homo sapiens (Human).